We begin with the raw amino-acid sequence, 374 residues long: Pectate lyase 3 (374 aa).

A signal peptide spans 1–22 (MKYLLPSTAAGLLLLAAQPTMA). A disulfide bond links Cys-93 and Cys-176. Residues Asp-150, Asp-152, Glu-187, and Asp-191 each contribute to the Ca(2+) site. Residue Arg-239 is part of the active site. Residues Cys-350 and Cys-373 are joined by a disulfide bond.

It belongs to the polysaccharide lyase 1 family. PLADES subfamily. Ca(2+) is required as a cofactor.

The protein resides in the secreted. It catalyses the reaction Eliminative cleavage of (1-&gt;4)-alpha-D-galacturonan to give oligosaccharides with 4-deoxy-alpha-D-galact-4-enuronosyl groups at their non-reducing ends.. It functions in the pathway glycan metabolism; pectin degradation; 2-dehydro-3-deoxy-D-gluconate from pectin: step 2/5. In terms of biological role, involved in maceration and soft-rotting of plant tissue. The protein is Pectate lyase 3 (pel3) of Pectobacterium atrosepticum (strain SCRI 1043 / ATCC BAA-672) (Erwinia carotovora subsp. atroseptica).